The sequence spans 81 residues: Sulfur carrier protein TusA (81 aa).

Cys19 functions as the Cysteine persulfide intermediate in the catalytic mechanism.

Belongs to the sulfur carrier protein TusA family.

It is found in the cytoplasm. In terms of biological role, sulfur carrier protein which probably makes part of a sulfur-relay system. The chain is Sulfur carrier protein TusA from Shewanella piezotolerans (strain WP3 / JCM 13877).